Consider the following 96-residue polypeptide: Large ribosomal subunit protein bL25 (96 aa).

It belongs to the bacterial ribosomal protein bL25 family. In terms of assembly, part of the 50S ribosomal subunit; part of the 5S rRNA/L5/L18/L25 subcomplex. Contacts the 5S rRNA. Binds to the 5S rRNA independently of L5 and L18.

Its function is as follows. This is one of the proteins that binds to the 5S RNA in the ribosome where it forms part of the central protuberance. In Francisella tularensis subsp. tularensis (strain FSC 198), this protein is Large ribosomal subunit protein bL25.